The chain runs to 540 residues: Chaperonin GroEL 2 (540 aa).

ATP is bound by residues 29–32, Lys-50, 86–90, Gly-414, and Asp-496; these read TMGP and DGTTT.

Belongs to the chaperonin (HSP60) family. Forms a cylinder of 14 subunits composed of two heptameric rings stacked back-to-back. Interacts with the co-chaperonin GroES.

It localises to the cytoplasm. The enzyme catalyses ATP + H2O + a folded polypeptide = ADP + phosphate + an unfolded polypeptide.. Its function is as follows. Together with its co-chaperonin GroES, plays an essential role in assisting protein folding. The GroEL-GroES system forms a nano-cage that allows encapsulation of the non-native substrate proteins and provides a physical environment optimized to promote and accelerate protein folding. The protein is Chaperonin GroEL 2 of Rhodopirellula baltica (strain DSM 10527 / NCIMB 13988 / SH1).